The sequence spans 912 residues: Rho guanine nucleotide exchange factor 1 (912 aa).

Residues 41–232 enclose the RGSL domain; the sequence is EQNSQFQSLE…GLYMRHLGVR (192 aa). Residues 248-413 form a disordered region; the sequence is KVMGNRRSDE…PDTLHSLPKS (166 aa). The segment covering 283-313 has biased composition (basic and acidic residues); the sequence is DFRHLKAEVDAEKPGATDRKGGVGMPSRDRN. The segment covering 365–381 has biased composition (acidic residues); that stretch reads STDEGAETESPEPGDEG. Serine 374 and serine 409 each carry phosphoserine. The 190-residue stretch at 416–605 folds into the DH domain; that stretch reads KRQEVISELL…REILHHVNQA (190 aa). In terms of domain architecture, PH spans 647-760; sequence KLVHEGPLTW…WCALITETAG (114 aa). At threonine 695 the chain carries Phosphothreonine. Tyrosine 738 bears the Phosphotyrosine; by JAK2 mark. Disordered regions lie at residues 763-802 and 841-865; these read KVPA…PADA and AEED…LSPA. The segment covering 777 to 789 has biased composition (low complexity); it reads PSSTREPLLSSSE. Residue serine 863 is modified to Phosphoserine. Positions 865-896 form a coiled coil; that stretch reads ARTQEIQENLLSLEETMKQLEELEEEFCRLRP.

Interacts with RHOA, GNA12 and GNA13. Homooligomerizes through the coiled coil region. May interact with CCPG1. Interacts with CTNNAL1. Phosphorylated by PKCA. Angiotensin-2 induced Tyr-738 phosphorylation is mediated by JAK2. Ubiquitously expressed.

It localises to the cytoplasm. The protein resides in the membrane. In terms of biological role, seems to play a role in the regulation of RhoA GTPase by guanine nucleotide-binding alpha-12 (GNA12) and alpha-13 (GNA13) subunits. Acts as a GTPase-activating protein (GAP) for GNA12 and GNA13, and as guanine nucleotide exchange factor (GEF) for RhoA GTPase. Activated G alpha 13/GNA13 stimulates the RhoGEF activity through interaction with the RGS-like domain. This GEF activity is inhibited by binding to activated GNA12. Mediates angiotensin-2-induced RhoA activation. In lymphoid follicles, may trigger activation of GNA13 as part of S1PR2-dependent signaling pathway that leads to inhibition of germinal center (GC) B cell growth and migration outside the GC niche. The sequence is that of Rho guanine nucleotide exchange factor 1 (ARHGEF1) from Homo sapiens (Human).